A 171-amino-acid chain; its full sequence is MTAILITGYRSFEIGIFDHKDPRVSIIKQAIRKDLIGYLENGVDWFIFTGNLGFEQWALEVANELKEEYPLQIATIFLFETHGDKWNEKNQEVLSQFKAVDFVKYYFPNYEQPTQFSQYYQFLLEKTEGAYVFYDTENETNLKYFLKKAKDMPHYQLLLLTFDRLNDMSQS.

This sequence belongs to the UPF0398 family.

This Streptococcus pyogenes serotype M18 (strain MGAS8232) protein is UPF0398 protein spyM18_1659.